The primary structure comprises 130 residues: Small ribosomal subunit protein uS11 (130 aa).

This sequence belongs to the universal ribosomal protein uS11 family. As to quaternary structure, part of the 30S ribosomal subunit. Interacts with proteins S7 and S18. Binds to IF-3.

Functionally, located on the platform of the 30S subunit, it bridges several disparate RNA helices of the 16S rRNA. Forms part of the Shine-Dalgarno cleft in the 70S ribosome. The protein is Small ribosomal subunit protein uS11 of Kosmotoga olearia (strain ATCC BAA-1733 / DSM 21960 / TBF 19.5.1).